The sequence spans 135 residues: Transcriptional regulator HosA (135 aa).

The region spanning 4 to 134 is the HTH marR-type domain; it reads RNKAFHQLRQ…FMQLVRKMMN (131 aa). Residues 48–71 constitute a DNA-binding region (H-T-H motif); it reads QVALIEAAVSTKATLAEMLARMEN.

Involved in the temperature-dependent positive control of flagellum-driven swimming motility and cellular aggregation. Regulates fliC expression by directly interacting with fliC promoter. The protein is Transcriptional regulator HosA (hosA) of Escherichia coli O127:H6 (strain E2348/69 / EPEC).